A 700-amino-acid polypeptide reads, in one-letter code: Calpain-2 catalytic subunit (700 aa).

The propeptide at 2–19 (AGMAAALAKERAAAAGAG) is anchors to the small subunit. One can recognise a Calpain catalytic domain in the interval 45–344 (LFHDPSFPAG…YSRLEICNLT (300 aa)). 2 residues coordinate Ca(2+): glycine 91 and aspartate 96. Cysteine 105 is a catalytic residue. Ca(2+) contacts are provided by glutamate 175, glutamine 229, and lysine 230. Catalysis depends on residues histidine 262 and asparagine 286. Ca(2+) contacts are provided by glutamate 292, aspartate 299, and glutamate 323. The domain III stretch occupies residues 345-514 (PDTLASDRYK…KNANSTVIDD (170 aa)). Residues 515 to 529 (EIEANFEETEIDEDD) form a linker region. Residues 530-700 (IEPSFKKLFG…LINWLFFTVI (171 aa)) are domain IV. Ca(2+) is bound by residues alanine 542, aspartate 545, glutamate 547, glutamate 552, aspartate 585, aspartate 587, serine 589, lysine 591, glutamate 596, aspartate 615, aspartate 617, serine 619, threonine 621, glutamate 626, aspartate 658, and asparagine 661. 2 EF-hand domains span residues 572–605 (FSIETCKIMVDLLDNDGSGKLGLKEFHTLWTKIQ) and 602–637 (TKIQKYQKIYREIDVDRSGTMNSYEMRRALEAAGFK). The 34-residue stretch at 667–700 (IRLETLYKMFRKLDTEKTGTIELNLINWLFFTVI) folds into the EF-hand 3 domain.

The protein belongs to the peptidase C2 family. As to quaternary structure, forms a heterodimer with a small (regulatory) subunit (CAPNS1). Ca(2+) serves as cofactor. In terms of tissue distribution, ubiquitous.

The protein resides in the cytoplasm. It is found in the cell membrane. It catalyses the reaction Broad endopeptidase specificity.. Activated by 200-1000 micromolar concentrations of calcium and inhibited by calpastatin. Calcium-regulated non-lysosomal thiol-protease which catalyze limited proteolysis of substrates involved in cytoskeletal remodeling and signal transduction. This Gallus gallus (Chicken) protein is Calpain-2 catalytic subunit (CAPN2).